The primary structure comprises 111 residues: Dormancy-associated protein 1 (111 aa).

Residues 30-60 (KDDGASNQLMRSTSIPTTPTTPVTPTTPSSA) are disordered. Residues 41–59 (STSIPTTPTTPVTPTTPSS) are compositionally biased toward low complexity.

This sequence belongs to the DRM1/ARP family. Expressed in axilary buds and in non-growing stems and roots. Detected in sepals, stamens and carpels, but barely detected in petals or leaflets.

This Pisum sativum (Garden pea) protein is Dormancy-associated protein 1.